Here is an 867-residue protein sequence, read N- to C-terminus: uncharacterized protein (867 aa).

Residues 76 to 108 constitute a DNA-binding region (zn(2)-C6 fungal-type); that stretch reads CDFCRQKKIRCDMDQSPRPGNACINCRKHHLDC. Disordered regions lie at residues 110–167 and 217–257; these read FTRT…ITPV and PQLA…NSNL. 2 stretches are compositionally biased toward polar residues: residues 137–167 and 248–257; these read SAKS…ITPV and SISSYTNSNL.

It localises to the nucleus. This is an uncharacterized protein from Schizosaccharomyces pombe (strain 972 / ATCC 24843) (Fission yeast).